The primary structure comprises 181 residues: Histone deacetylase complex subunit SAP30L-B (181 aa).

Cystine bridges form between cysteine 26/cysteine 27 and cysteine 35/cysteine 71. An Atypical zinc finger spans residues 26-74 (CCLIDGGERCPRPAGNASFSKRVQKSISQKKLKLDIDKSVRHLYICDFH). The disordered stretch occupies residues 82–103 (RNKRKRKTSDDGGDSPEHETDV). The Nuclear localization signal (NLS) motif lies at 83-88 (NKRKRK). Residues 85–87 (RKR) are important for DNA and phosphoinositide binding.

This sequence belongs to the SAP30 family. In terms of assembly, interacts with components of the histone deacetylase complex sin3a, hdac1 and hdac2. Binds histones and nucleosomes.

The protein resides in the nucleus. It localises to the nucleolus. Its function is as follows. Functions as a transcription repressor, probably via its interaction with histone deacetylase complexes. Involved in the functional recruitment of the class 1 Sin3-histone deacetylase complex (HDAC) to the nucleolus. Binds DNA, apparently without sequence-specificity, and bends bound double-stranded DNA. Binds phosphoinositol phosphates (phosphoinositol 3-phosphate, phosphoinositol 4-phosphate and phosphoinositol 5-phosphate) via the same basic sequence motif that mediates DNA binding and nuclear import. The protein is Histone deacetylase complex subunit SAP30L-B (sap30l-b) of Xenopus laevis (African clawed frog).